The sequence spans 105 residues: Thioredoxin (105 aa).

The 104-residue stretch at 2–105 (VKLIESKEAF…KLEATITEFA (104 aa)) folds into the Thioredoxin domain. An N6-acetyllysine modification is found at lysine 3. Lysine 8 is subject to N6-succinyllysine. Active-site nucleophile residues include cysteine 32 and cysteine 35. Cysteine 32 and cysteine 35 are disulfide-bonded. The residue at position 39 (lysine 39) is an N6-acetyllysine. Residues cysteine 62 and cysteine 69 each carry the S-nitrosocysteine modification. Cysteine 73 carries the post-translational modification S-nitrosocysteine; alternate. Lysine 94 bears the N6-acetyllysine; alternate mark. Position 94 is an N6-succinyllysine; alternate (lysine 94).

The protein belongs to the thioredoxin family. As to quaternary structure, homodimer; disulfide-linked. Interacts with TXNIP through the redox-active site. Interacts with MAP3K5 and CASP3. Interacts with APEX1; the interaction stimulates the FOS/JUN AP-1 DNA-binding activity in a redox-dependent manner. In the fully reduced protein, both Cys-69 and Cys-73 are nitrosylated in response to nitric oxide (NO). When two disulfide bonds are present in the protein, only Cys-73 is nitrosylated. Cys-73 can serve as donor for nitrosylation of target proteins.

The protein localises to the nucleus. It is found in the cytoplasm. Its subcellular location is the secreted. Its function is as follows. Participates in various redox reactions through the reversible oxidation of its active center dithiol to a disulfide and catalyzes dithiol-disulfide exchange reactions. Plays a role in the reversible S-nitrosylation of cysteine residues in target proteins, and thereby contributes to the response to intracellular nitric oxide. Nitrosylates the active site Cys of CASP3 in response to nitric oxide (NO), and thereby inhibits caspase-3 activity. Induces the FOS/JUN AP-1 DNA binding activity in ionizing radiation (IR) cells through its oxidation/reduction status and stimulates AP-1 transcriptional activity. This Rattus norvegicus (Rat) protein is Thioredoxin (Txn).